A 283-amino-acid chain; its full sequence is E3 ubiquitin-protein ligase MARCHF5 (283 aa).

The segment at valine 9 to valine 78 adopts an RING-CH-type zinc-finger fold. Residues cysteine 17, cysteine 20, cysteine 36, cysteine 38, histidine 46, cysteine 49, cysteine 68, and cysteine 71 each coordinate Zn(2+). 4 helical membrane-spanning segments follow: residues phenylalanine 102–valine 122, proline 142–isoleucine 162, isoleucine 212–serine 232, and threonine 241–glutamine 261.

The protein resides in the mitochondrion outer membrane. Its subcellular location is the endoplasmic reticulum membrane. The enzyme catalyses S-ubiquitinyl-[E2 ubiquitin-conjugating enzyme]-L-cysteine + [acceptor protein]-L-lysine = [E2 ubiquitin-conjugating enzyme]-L-cysteine + N(6)-ubiquitinyl-[acceptor protein]-L-lysine.. The protein operates within protein modification; protein ubiquitination. Mitochondrial E3 ubiquitin-protein ligase that plays a crucial role in the control of mitochondrial morphology by acting as a positive regulator of mitochondrial fission. May play a role in the prevention of cell senescence acting as a regulator of mitochondrial quality control. The protein is E3 ubiquitin-protein ligase MARCHF5 (marchf5) of Xenopus laevis (African clawed frog).